Here is a 718-residue protein sequence, read N- to C-terminus: Peroxisomal bifunctional enzyme (718 aa).

Residues 2–280 (ARYELVKRSV…FAQRTAEKWT (279 aa)) form an enoyl-CoA hydratase / isomerase region. Gly100 is a substrate binding site. The segment at 281–567 (LPSGAQWNNS…DMVCQQGRFG (287 aa)) is 3-hydroxyacyl-CoA dehydrogenase. The short motif at 716-718 (SHL) is the Microbody targeting signal element.

This sequence in the N-terminal section; belongs to the enoyl-CoA hydratase/isomerase family. The protein in the C-terminal section; belongs to the 3-hydroxyacyl-CoA dehydrogenase family. Monomer.

The protein localises to the peroxisome. The enzyme catalyses a (3S)-3-hydroxyacyl-CoA = a (2E)-enoyl-CoA + H2O. The catalysed reaction is a 4-saturated-(3S)-3-hydroxyacyl-CoA = a (3E)-enoyl-CoA + H2O. It catalyses the reaction a (3Z)-enoyl-CoA = a 4-saturated (2E)-enoyl-CoA. It carries out the reaction a (3E)-enoyl-CoA = a 4-saturated (2E)-enoyl-CoA. The enzyme catalyses a (3S)-3-hydroxyacyl-CoA + NAD(+) = a 3-oxoacyl-CoA + NADH + H(+). The catalysed reaction is (2S,3S)-3-hydroxy-2-methylbutanoyl-CoA = (2E)-2-methylbut-2-enoyl-CoA + H2O. It catalyses the reaction (3S)-hydroxyhexadecanoyl-CoA + NAD(+) = 3-oxohexadecanoyl-CoA + NADH + H(+). It carries out the reaction (3S)-hydroxyhexadecanoyl-CoA = (2E)-hexadecenoyl-CoA + H2O. The enzyme catalyses (2E)-hexadecenedioyl-CoA + H2O = (3S)-hydroxyhexadecanedioyl-CoA. The catalysed reaction is (3S)-hydroxyhexadecanedioyl-CoA + NAD(+) = 3-oxohexadecanedioyl-CoA + NADH + H(+). It catalyses the reaction (3E,5Z)-tetradecadienoyl-CoA = (2E,5Z)-tetradecadienoyl-CoA. It carries out the reaction (3E,5Z)-octadienoyl-CoA = (2E,5Z)-octadienoyl-CoA. The enzyme catalyses (3S)-hydroxydecanoyl-CoA + NAD(+) = 3-oxodecanoyl-CoA + NADH + H(+). The catalysed reaction is (3E)-decenoyl-CoA = (2E)-decenoyl-CoA. It catalyses the reaction (3Z)-hexenoyl-CoA = (2E)-hexenoyl-CoA. It carries out the reaction (3E)-hexenoyl-CoA = (2E)-hexenoyl-CoA. The enzyme catalyses (3S)-hydroxydecanoyl-CoA = (2E)-decenoyl-CoA + H2O. The catalysed reaction is (3S)-hydroxyhexanoyl-CoA = (2E)-hexenoyl-CoA + H2O. Its pathway is lipid metabolism; fatty acid beta-oxidation. Peroxisomal trifunctional enzyme possessing 2-enoyl-CoA hydratase, 3-hydroxyacyl-CoA dehydrogenase, and delta 3, delta 2-enoyl-CoA isomerase activities. Catalyzes two of the four reactions of the long straight chain fatty acids peroxisomal beta-oxidation pathway. Can also use branched-chain fatty acids such as 2-methyl-2E-butenoyl-CoA as a substrate, which is hydrated into (2S,3S)-3-hydroxy-2-methylbutanoyl-CoA. Optimal isomerase for 2,5 double bonds into 3,5 form isomerization in a range of enoyl-CoA species. Also able to isomerize both 3-cis and 3-trans double bonds into the 2-trans form in a range of enoyl-CoA species. Regulates the amount of medium-chain dicarboxylic fatty acids which are essential regulators of all fatty acid oxidation pathways. Also involved in the degradation of long-chain dicarboxylic acids through peroxisomal beta-oxidation. The polypeptide is Peroxisomal bifunctional enzyme (ehhadh) (Danio rerio (Zebrafish)).